The sequence spans 285 residues: Putative ankyrin repeat protein R551 (285 aa).

4 ANK repeats span residues 99-129, 157-186, 188-214, and 215-249; these read DLKS…PIKI, NDFD…LQDE, IGKI…EAFR, and SAPD…CIQQ.

This Acanthamoeba polyphaga (Amoeba) protein is Putative ankyrin repeat protein R551.